Reading from the N-terminus, the 118-residue chain is Small ribosomal subunit protein uS13 (118 aa).

The tract at residues 93–118 (RGLPVRGQRTKTNARTRKGPRKPIRK) is disordered.

Belongs to the universal ribosomal protein uS13 family. As to quaternary structure, part of the 30S ribosomal subunit. Forms a loose heterodimer with protein S19. Forms two bridges to the 50S subunit in the 70S ribosome.

In terms of biological role, located at the top of the head of the 30S subunit, it contacts several helices of the 16S rRNA. In the 70S ribosome it contacts the 23S rRNA (bridge B1a) and protein L5 of the 50S subunit (bridge B1b), connecting the 2 subunits; these bridges are implicated in subunit movement. Contacts the tRNAs in the A and P-sites. This is Small ribosomal subunit protein uS13 from Azotobacter vinelandii (strain DJ / ATCC BAA-1303).